A 383-amino-acid polypeptide reads, in one-letter code: Trichodiene synthase (383 aa).

This sequence belongs to the trichodiene synthase family.

It catalyses the reaction (2E,6E)-farnesyl diphosphate = trichodiene + diphosphate. It participates in sesquiterpene biosynthesis; trichothecene biosynthesis. Functionally, TS is a member of the terpene cyclase group of enzymes. It catalyzes the isomerization and cyclization of farnesyl pyro-phosphate to form trichodiene, the first cyclic intermediate in the biosynthetic pathway for trichothecenes. It serves to branch trichothecene biosynthesis from the isoprenoid pathway. The protein is Trichodiene synthase (TRI5) of Stachybotrys chartarum (Toxic black mold).